Here is a 108-residue protein sequence, read N- to C-terminus: Phosphoribosyl-ATP pyrophosphatase (108 aa).

Belongs to the PRA-PH family.

It is found in the cytoplasm. The catalysed reaction is 1-(5-phospho-beta-D-ribosyl)-ATP + H2O = 1-(5-phospho-beta-D-ribosyl)-5'-AMP + diphosphate + H(+). The protein operates within amino-acid biosynthesis; L-histidine biosynthesis; L-histidine from 5-phospho-alpha-D-ribose 1-diphosphate: step 2/9. The protein is Phosphoribosyl-ATP pyrophosphatase of Pelobacter propionicus (strain DSM 2379 / NBRC 103807 / OttBd1).